We begin with the raw amino-acid sequence, 641 residues long: WW domain-binding protein 11 (641 aa).

Residues 1-11 (MGRRSTSSTKS) are compositionally biased toward polar residues. Residues 1 to 37 (MGRRSTSSTKSGKFMNPTDQARKEARKRELKKNKKQR) are disordered. The required for nuclear import stretch occupies residues 1-45 (MGRRSTSSTKSGKFMNPTDQARKEARKRELKKNKKQRMMVRAAVL). Residue lysine 13 is modified to N6-acetyllysine. Residues 28 to 37 (RELKKNKKQR) show a composition bias toward basic residues. Residues 75 to 133 (EKVLKDKRKKLRETFERILRLYEKENPDIYKELRKLEVEYEQKRAQLSQYFDAVKNAQH) adopt a coiled-coil conformation. Serine 181 carries the phosphoserine modification. The tract at residues 186–213 (LGHGVPRLPPGRKPPGPPPGPPPPQVLQ) is disordered. Arginine 192 carries the omega-N-methylarginine modification. The segment covering 192-210 (RLPPGRKPPGPPPGPPPPQ) has biased composition (pro residues). The interaction with PP1 stretch occupies residues 217–221 (RKVGF). At tyrosine 236 the chain carries Phosphotyrosine. Positions 236–549 (YSPELAQRGH…LIQRPKADDA (314 aa)) are disordered. Residue serine 237 is modified to Phosphoserine. Acidic residues predominate over residues 253 to 263 (SEDDGYPEDMD). The span at 276–304 (TDRSDAESDGDEFGHRDDSERDNTEEKKS) shows a compositional bias: basic and acidic residues. Phosphoserine is present on residues serine 279 and serine 283. An interaction with PP1 region spans residues 306 to 310 (LSVRF). The span at 351-365 (EFSEEEDDDDSEDSE) shows a compositional bias: acidic residues. 3 positions are modified to phosphoserine: serine 353, serine 361, and serine 364. Residues 366-380 (AEKPSQKQHKEDSHA) are compositionally biased toward basic and acidic residues. The segment covering 381–404 (DGSSAASSQQQAPPQAVPPSQIQA) has biased composition (low complexity). Composition is skewed to pro residues over residues 405–447 (PPMP…PPGM), 456–504 (RLLP…PPRP), and 510–530 (PLVP…PLPN). A PGR motif is present at residues 455–466 (PRLLPPGPPPGR). A Glycyl lysine isopeptide (Lys-Gly) (interchain with G-Cter in SUMO2) cross-link involves residue lysine 557. An N6-acetyllysine modification is found at lysine 565. A Glycyl lysine isopeptide (Lys-Gly) (interchain with G-Cter in SUMO2) cross-link involves residue lysine 572. A disordered region spans residues 588 to 623 (ENKGATAVPQRRSEEDSAVPVAKAAPRSGPSVPVSV). Phosphoserine is present on serine 600.

Interacts with PPP1CA, PPP1CB and PPP1CC. Interacts via the PGR motif with PQBP1 in the nucleus. Interacts with the WW domains of WBP4.

It is found in the nucleus. The protein localises to the cytoplasm. Its function is as follows. Activates pre-mRNA splicing. May inhibit PP1 phosphatase activity. The chain is WW domain-binding protein 11 (Wbp11) from Rattus norvegicus (Rat).